Here is a 466-residue protein sequence, read N- to C-terminus: UDP-N-acetylmuramoylalanine--D-glutamate ligase (466 aa).

121–127 (GTNGKST) provides a ligand contact to ATP.

It belongs to the MurCDEF family.

Its subcellular location is the cytoplasm. The catalysed reaction is UDP-N-acetyl-alpha-D-muramoyl-L-alanine + D-glutamate + ATP = UDP-N-acetyl-alpha-D-muramoyl-L-alanyl-D-glutamate + ADP + phosphate + H(+). Its pathway is cell wall biogenesis; peptidoglycan biosynthesis. Cell wall formation. Catalyzes the addition of glutamate to the nucleotide precursor UDP-N-acetylmuramoyl-L-alanine (UMA). The protein is UDP-N-acetylmuramoylalanine--D-glutamate ligase of Nitrobacter hamburgensis (strain DSM 10229 / NCIMB 13809 / X14).